The sequence spans 614 residues: 1-deoxy-D-xylulose-5-phosphate synthase (614 aa).

Residues His76 and 117–119 contribute to the thiamine diphosphate site; that span reads GHS. Asp148 is a Mg(2+) binding site. Thiamine diphosphate-binding positions include 149–150, Asn177, Tyr285, and Glu366; that span reads GA. Asn177 is a Mg(2+) binding site.

This sequence belongs to the transketolase family. DXPS subfamily. In terms of assembly, homodimer. The cofactor is Mg(2+). Thiamine diphosphate is required as a cofactor.

It carries out the reaction D-glyceraldehyde 3-phosphate + pyruvate + H(+) = 1-deoxy-D-xylulose 5-phosphate + CO2. It functions in the pathway metabolic intermediate biosynthesis; 1-deoxy-D-xylulose 5-phosphate biosynthesis; 1-deoxy-D-xylulose 5-phosphate from D-glyceraldehyde 3-phosphate and pyruvate: step 1/1. Functionally, catalyzes the acyloin condensation reaction between C atoms 2 and 3 of pyruvate and glyceraldehyde 3-phosphate to yield 1-deoxy-D-xylulose-5-phosphate (DXP). This chain is 1-deoxy-D-xylulose-5-phosphate synthase, found in Pasteurella multocida (strain Pm70).